Here is a 352-residue protein sequence, read N- to C-terminus: Selenide, water dikinase (352 aa).

Residue C23 is part of the active site. Residues K26 and S54–D56 contribute to the ATP site. A Mg(2+)-binding site is contributed by D57. ATP is bound by residues D74, D97, and G145–S147. Residue D97 coordinates Mg(2+). D233 lines the Mg(2+) pocket.

This sequence belongs to the selenophosphate synthase 1 family. Class I subfamily. As to quaternary structure, homodimer. It depends on Mg(2+) as a cofactor.

The catalysed reaction is hydrogenselenide + ATP + H2O = selenophosphate + AMP + phosphate + 2 H(+). Functionally, synthesizes selenophosphate from selenide and ATP. This chain is Selenide, water dikinase, found in Shewanella baltica (strain OS185).